Reading from the N-terminus, the 2498-residue chain is PKS-NRPS hybrid synthetase acdB (2498 aa).

An adenylation (A) domain region spans residues 34 to 427; it reads FEQAAHAHFD…GRADSQVKIR (394 aa). Positions 531-606 constitute a Carrier 1 domain; the sequence is QPATELERDI…SLAGYLMDMD (76 aa). Ser566 is modified (O-(pantetheine 4'-phosphoryl)serine). A Ketosynthase family 3 (KS3) domain is found at 627–1058; it reads SDDIAVVSMA…GTNAHVIVEE (432 aa). Catalysis depends on for beta-ketoacyl synthase activity residues Cys802, His938, and His979. The segment at 1165 to 1485 is malonyl-CoA:ACP transacylase (MAT) domain; sequence LFAGQGSQQL…EILARLHVQH (321 aa). Residues 1739 to 1917 form a ketoreductase (KR) domain region; that stretch reads GAVLITGGLS…PAVCVAYGPL (179 aa). The Carrier 2 domain occupies 2017–2092; sequence EILLRTIQEA…ELSRYLLPQL (76 aa). Ser2052 bears the O-(pantetheine 4'-phosphoryl)serine mark. The thioester reductase (TE) domain stretch occupies residues 2149–2378; it reads VTGATEFVGA…FPVDYVCRTI (230 aa).

This sequence in the C-terminal section; belongs to the NRP synthetase family. Requires pantetheine 4'-phosphate as cofactor.

Its pathway is secondary metabolite biosynthesis. Its function is as follows. PKS-NRPS hybrid synthetase; part of the gene cluster that mediates the biosynthesis of aspcandine, a pyrrolobenzazepine alkaloid. Initially, the indoleamine 2,3-dioxygenase acdA accepts L-tryptophan and performs the oxidative opening of the indole ring to yield N'-formyl-L-kynurenine, which undergoes the spontaneous deformylation reaction to provide L-kynurenine. The kynurenine 3-monooxygenase acdD then hydroxylates L-kynurenine to afford 3-hydroxy-L-kynurenine. 3-hydroxy-L-kynurenine is activated by the A domain of the NRPS-PKS acdB and subsequently loaded onto the enzyme. The KS domain conducts the decarboxylative condensation of the 3-hydroxy-L-kynurenyl and malonyl moieties, and subsequent nucleophilic attacks by the two amino groups would occur nonenzymatically at two distinct positions, achieving the chain release and the construction of the tricyclic system. Finally, a dehydration reaction completes the biosynthesis to yield aspcandine. The polypeptide is PKS-NRPS hybrid synthetase acdB (Aspergillus candidus).